The sequence spans 458 residues: UDP-N-acetylglucosamine 1-carboxyvinyltransferase (458 aa).

34 to 35 provides a ligand contact to phosphoenolpyruvate; the sequence is KN. Arginine 104 lines the UDP-N-acetyl-alpha-D-glucosamine pocket. The Proton donor role is filled by cysteine 128. Residue cysteine 128 is modified to 2-(S-cysteinyl)pyruvic acid O-phosphothioketal. Residues aspartate 320 and valine 342 each contribute to the UDP-N-acetyl-alpha-D-glucosamine site.

Belongs to the EPSP synthase family. MurA subfamily.

The protein localises to the cytoplasm. The catalysed reaction is phosphoenolpyruvate + UDP-N-acetyl-alpha-D-glucosamine = UDP-N-acetyl-3-O-(1-carboxyvinyl)-alpha-D-glucosamine + phosphate. It functions in the pathway cell wall biogenesis; peptidoglycan biosynthesis. Its function is as follows. Cell wall formation. Adds enolpyruvyl to UDP-N-acetylglucosamine. This chain is UDP-N-acetylglucosamine 1-carboxyvinyltransferase, found in Prochlorococcus marinus (strain NATL2A).